The chain runs to 292 residues: Zinc finger protein SNAI3 (292 aa).

The SNAG domain stretch occupies residues 1–20; that stretch reads MPRSFLVKTHSSHRVPNYRR. 4 C2H2-type zinc fingers span residues 152 to 174, 183 to 205, 209 to 231, and 237 to 259; these read FECF…RQLH, FTCK…IRTH, CTCK…VRTH, and YACS…LQTH. The segment at 265–287 adopts a C2H2-type 5; degenerate zinc-finger fold; sequence YRCRRCTKTFSRMSLLARHEESG.

This sequence belongs to the snail C2H2-type zinc-finger protein family.

The protein resides in the nucleus. In terms of biological role, seems to inhibit myoblast differentiation. Transcriptional repressor of E-box-dependent transactivation of downstream myogenic bHLHs genes. Binds preferentially to the canonical E-box sequences 5'-CAGGTG-3' and 5'-CACCTG-3'. In Homo sapiens (Human), this protein is Zinc finger protein SNAI3 (SNAI3).